The following is a 213-amino-acid chain: TVP38/TMEM64 family membrane protein YtxB (213 aa).

Helical transmembrane passes span Trp-9–Val-29, Ile-34–Ile-54, Leu-58–Leu-78, Leu-81–Phe-101, Ala-159–Gly-179, and Leu-181–Phe-201.

Belongs to the TVP38/TMEM64 family.

It localises to the cell membrane. The chain is TVP38/TMEM64 family membrane protein YtxB (ytxB) from Bacillus subtilis (strain 168).